The primary structure comprises 548 residues: Chaperonin GroEL (548 aa).

Residues 30–33, Lys51, 87–91, Gly415, 479–481, and Asp495 each bind ATP; these read TLGP, DGTTT, and NAA.

The protein belongs to the chaperonin (HSP60) family. In terms of assembly, forms a cylinder of 14 subunits composed of two heptameric rings stacked back-to-back. Interacts with the co-chaperonin GroES.

The protein resides in the cytoplasm. It carries out the reaction ATP + H2O + a folded polypeptide = ADP + phosphate + an unfolded polypeptide.. Functionally, together with its co-chaperonin GroES, plays an essential role in assisting protein folding. The GroEL-GroES system forms a nano-cage that allows encapsulation of the non-native substrate proteins and provides a physical environment optimized to promote and accelerate protein folding. In Pectobacterium carotovorum subsp. carotovorum (strain PC1), this protein is Chaperonin GroEL.